The chain runs to 291 residues: MKKVIAITGPTASGKTSLSIKIAKKFNLEIINCDSLQMYQKYDIGTAKITIEEAQGIKHHLLDFLTPGTNYNIYYFQKDARKKIEEMPLPLFVGGSGLYLKSVLFDYELTPKSLFLPPISLTAIENMVDFIKKKDPQLIANLDLKNPRRILSAYQDLLSGTLRSQKNKKHNPLYSSLIFYLDIDRQILKKRVILRLEQMLKKGFIEEVNQIQTFFPNANFNIIGYREIKVLLEGKITLDQAKTLIIQKTMQYAKRQKTWFKNQIKPMILDALSPDLEKTTIGLINNFLKTD.

ATP is bound at residue 9–16 (GPTASGKT). Substrate is bound at residue 11–16 (TASGKT). Residues 34-37 (DSLQ) form an interaction with substrate tRNA region.

This sequence belongs to the IPP transferase family. In terms of assembly, monomer. Requires Mg(2+) as cofactor.

It catalyses the reaction adenosine(37) in tRNA + dimethylallyl diphosphate = N(6)-dimethylallyladenosine(37) in tRNA + diphosphate. Its function is as follows. Catalyzes the transfer of a dimethylallyl group onto the adenine at position 37 in tRNAs that read codons beginning with uridine, leading to the formation of N6-(dimethylallyl)adenosine (i(6)A). In Aster yellows witches'-broom phytoplasma (strain AYWB), this protein is tRNA dimethylallyltransferase.